Reading from the N-terminus, the 357-residue chain is Leucoanthocyanidin dioxygenase (357 aa).

A Fe2OG dioxygenase domain is found at 212-311 (LLLQMKINYY…RISWAVFCEP (100 aa)). Positions 236, 238, and 292 each coordinate Fe cation.

This sequence belongs to the iron/ascorbate-dependent oxidoreductase family. Fe cation serves as cofactor. It depends on L-ascorbate as a cofactor.

It carries out the reaction a (2R,3S,4S)-leucoanthocyanidin + 2-oxoglutarate + O2 = a 4-H-anthocyanidin with a 3-hydroxy group + succinate + CO2 + 2 H2O. It participates in pigment biosynthesis; anthocyanin biosynthesis. Functionally, oxidation of leucoanthocyanidins into anthocyanidins. The polypeptide is Leucoanthocyanidin dioxygenase (ANS) (Malus domestica (Apple)).